Consider the following 319-residue polypeptide: Fructokinase (319 aa).

Belongs to the carbohydrate kinase PfkB family. Expressed in swelling stolons and, at higher levels, in developing tubers. Low levels found in leaves and stems from tuberizing plants.

The catalysed reaction is D-fructose + ATP = D-fructose 6-phosphate + ADP + H(+). It functions in the pathway glycan biosynthesis; starch biosynthesis. May play an important role in maintaining the flux of carbon towards starch formation. This Solanum tuberosum (Potato) protein is Fructokinase.